A 106-amino-acid polypeptide reads, in one-letter code: uncharacterized protein (106 aa).

The next 2 membrane-spanning stretches (helical) occupy residues 43–63 and 86–106; these read CSTIIACNLGSWFFKISLAIV and IPELALIIICTFIYFLYFSLF.

It localises to the membrane. This is an uncharacterized protein from Saccharomyces cerevisiae (strain ATCC 204508 / S288c) (Baker's yeast).